A 329-amino-acid polypeptide reads, in one-letter code: Phosphate import ATP-binding protein PstB (329 aa).

Residues 83-325 (FEIENLNFWY…PKQKETNRYI (243 aa)) form the ABC transporter domain. 116 to 123 (GKSGCGKS) contributes to the ATP binding site.

The protein belongs to the ABC transporter superfamily. Phosphate importer (TC 3.A.1.7) family. In terms of assembly, the complex is composed of two ATP-binding proteins (PstB), two transmembrane proteins (PstC and PstA) and a solute-binding protein (PstS).

The protein resides in the cell membrane. The enzyme catalyses phosphate(out) + ATP + H2O = ADP + 2 phosphate(in) + H(+). Part of the ABC transporter complex PstSACB involved in phosphate import. Responsible for energy coupling to the transport system. The sequence is that of Phosphate import ATP-binding protein PstB from Mycoplasma pneumoniae (strain ATCC 29342 / M129 / Subtype 1) (Mycoplasmoides pneumoniae).